The sequence spans 157 residues: SsrA-binding protein (157 aa).

The interval 133–157 (LHDKRETAKERDWQRDKARLMRDKG) is disordered. The segment covering 135 to 157 (DKRETAKERDWQRDKARLMRDKG) has biased composition (basic and acidic residues).

This sequence belongs to the SmpB family.

Its subcellular location is the cytoplasm. Its function is as follows. Required for rescue of stalled ribosomes mediated by trans-translation. Binds to transfer-messenger RNA (tmRNA), required for stable association of tmRNA with ribosomes. tmRNA and SmpB together mimic tRNA shape, replacing the anticodon stem-loop with SmpB. tmRNA is encoded by the ssrA gene; the 2 termini fold to resemble tRNA(Ala) and it encodes a 'tag peptide', a short internal open reading frame. During trans-translation Ala-aminoacylated tmRNA acts like a tRNA, entering the A-site of stalled ribosomes, displacing the stalled mRNA. The ribosome then switches to translate the ORF on the tmRNA; the nascent peptide is terminated with the 'tag peptide' encoded by the tmRNA and targeted for degradation. The ribosome is freed to recommence translation, which seems to be the essential function of trans-translation. The protein is SsrA-binding protein of Methylobacterium sp. (strain 4-46).